A 404-amino-acid polypeptide reads, in one-letter code: Formate-dependent phosphoribosylglycinamide formyltransferase (404 aa).

Residues 25-26 (EL) and glutamate 85 contribute to the N(1)-(5-phospho-beta-D-ribosyl)glycinamide site. Residues arginine 118, lysine 159, 164–169 (SSGKGQ), 199–202 (EGFI), and glutamate 207 contribute to the ATP site. The ATP-grasp domain occupies 123 to 318 (RLAAEELGLP…EFELHARAIL (196 aa)). The Mg(2+) site is built by glutamate 277 and glutamate 289. N(1)-(5-phospho-beta-D-ribosyl)glycinamide is bound by residues aspartate 296, lysine 365, and 372–373 (RR). The tract at residues 384–404 (TDEARSRAKQAAAAVRPVSAK) is disordered. Residues 392–404 (KQAAAAVRPVSAK) are compositionally biased toward low complexity.

This sequence belongs to the PurK/PurT family. In terms of assembly, homodimer.

It carries out the reaction N(1)-(5-phospho-beta-D-ribosyl)glycinamide + formate + ATP = N(2)-formyl-N(1)-(5-phospho-beta-D-ribosyl)glycinamide + ADP + phosphate + H(+). It participates in purine metabolism; IMP biosynthesis via de novo pathway; N(2)-formyl-N(1)-(5-phospho-D-ribosyl)glycinamide from N(1)-(5-phospho-D-ribosyl)glycinamide (formate route): step 1/1. Its function is as follows. Involved in the de novo purine biosynthesis. Catalyzes the transfer of formate to 5-phospho-ribosyl-glycinamide (GAR), producing 5-phospho-ribosyl-N-formylglycinamide (FGAR). Formate is provided by PurU via hydrolysis of 10-formyl-tetrahydrofolate. The sequence is that of Formate-dependent phosphoribosylglycinamide formyltransferase from Paraburkholderia xenovorans (strain LB400).